The chain runs to 200 residues: MLAFCRSSLKSKKYFIILLALAAIAGLGTHAAWSSNGLPRIDNKTLARLAQQHPVVVLFRHAERCDRSTNQCLSDKTGITVKGTQDARELGNAFSADIPDFDLYSSNTVRTIQSATWFSAGKKLTVDKRLLQCGNEIYSAIKNLQSKAPDKNIVIFTHNHCLTYIAKDKRDATFKPDYLDGLVMHVEKGKVYLDGEFVNH.

A signal peptide spans 1–25 (MLAFCRSSLKSKKYFIILLALAAIA).

This sequence belongs to the phosphoglycerate mutase family. Ais subfamily.

It is found in the periplasm. Its pathway is bacterial outer membrane biogenesis; lipopolysaccharide metabolism. Functionally, catalyzes the dephosphorylation of heptose(II) of the outer membrane lipopolysaccharide core. This chain is Lipopolysaccharide core heptose(II)-phosphate phosphatase, found in Escherichia coli O7:K1 (strain IAI39 / ExPEC).